The chain runs to 124 residues: Conotoxin Cl14.12 (124 aa).

Positions 1–17 are cleaved as a signal peptide; it reads MKVAVVLLVSLLAVTYA. A propeptide spanning residues 18-74 is cleaved from the precursor; the sequence is LPEKRIFFGGIVDKVKDTFTKIFNKAKETFDKITDGFDVDFDEVVDKLIAQIHSTPT.

Post-translationally, contains 2 disulfide bond. Expressed by the venom duct.

It is found in the secreted. This is Conotoxin Cl14.12 from Californiconus californicus (California cone).